Here is a 178-residue protein sequence, read N- to C-terminus: Endoribonuclease YbeY (178 aa).

Residues His118, His122, and His128 each contribute to the Zn(2+) site.

Belongs to the endoribonuclease YbeY family. Zn(2+) serves as cofactor.

It is found in the cytoplasm. Functionally, single strand-specific metallo-endoribonuclease involved in late-stage 70S ribosome quality control and in maturation of the 3' terminus of the 16S rRNA. This is Endoribonuclease YbeY from Mycolicibacterium gilvum (strain PYR-GCK) (Mycobacterium gilvum (strain PYR-GCK)).